Consider the following 514-residue polypeptide: Serine/threonine protein phosphatase PstP (514 aa).

Residues 1–302 lie on the Cytoplasmic side of the membrane; sequence MARVTLVLRY…RPRWSGRRLA (302 aa). Residues 9 to 238 form the PPM-type phosphatase domain; that stretch reads RYAARSDRGL…DNVTVVVADV (230 aa). Residues D38, G39, D118, S160, D191, and D229 each contribute to the Mn(2+) site. The helical transmembrane segment at 303–323 threads the bilayer; that stretch reads FVVALVTVLMTAGLLIGRAII. The Extracellular segment spans residues 324-514; the sequence is RSNYYVADYA…QPGIDCRAAA (191 aa). The interval 420 to 514 is disordered; sequence LLPPCPAPRA…QPGIDCRAAA (95 aa). Over residues 440-480 the composition is skewed to low complexity; sequence TTSETTEPNVTSSPASPSPTTSASAPTGTTPAIPTSASPAA.

It depends on Mn(2+) as a cofactor.

Its subcellular location is the cell membrane. The enzyme catalyses O-phospho-L-seryl-[protein] + H2O = L-seryl-[protein] + phosphate. It catalyses the reaction O-phospho-L-threonyl-[protein] + H2O = L-threonyl-[protein] + phosphate. Plays an important role in regulating cell division and growth by reversible phosphorylation signaling. May play important roles in regulating cellular metabolism and signaling pathways, which could mediate the growth and development of the cell. Plays a role in establishing and maintaining infection. The sequence is that of Serine/threonine protein phosphatase PstP (pstP) from Mycobacterium tuberculosis (strain CDC 1551 / Oshkosh).